The chain runs to 1161 residues: ATP-dependent helicase/deoxyribonuclease subunit B (1161 aa).

Belongs to the helicase family. AddB/RexB type 2 subfamily. Heterodimer of AddA and RexB. Requires Mg(2+) as cofactor.

The heterodimer acts as both an ATP-dependent DNA helicase and an ATP-dependent, dual-direction single-stranded exonuclease. Recognizes the chi site generating a DNA molecule suitable for the initiation of homologous recombination. This subunit has 5' -&gt; 3' nuclease activity but not helicase activity. The polypeptide is ATP-dependent helicase/deoxyribonuclease subunit B (Oenococcus oeni (strain ATCC BAA-331 / PSU-1)).